Here is a 407-residue protein sequence, read N- to C-terminus: DNA-directed RNA polymerase subunit Rpo1C (407 aa).

The protein belongs to the RNA polymerase beta' chain family. As to quaternary structure, part of the RNA polymerase complex.

Its subcellular location is the cytoplasm. The catalysed reaction is RNA(n) + a ribonucleoside 5'-triphosphate = RNA(n+1) + diphosphate. Functionally, DNA-dependent RNA polymerase (RNAP) catalyzes the transcription of DNA into RNA using the four ribonucleoside triphosphates as substrates. Forms part of the jaw domain. This Aeropyrum pernix (strain ATCC 700893 / DSM 11879 / JCM 9820 / NBRC 100138 / K1) protein is DNA-directed RNA polymerase subunit Rpo1C.